Reading from the N-terminus, the 1594-residue chain is Transcription factor Gibbin (1594 aa).

Disordered regions lie at residues 19 to 111 (PDYL…RHWD), 149 to 241 (LRLS…LADA), 256 to 307 (QLLE…DPLG), and 367 to 464 (CSPH…RKGK). A compositionally biased stretch (pro residues) spans 30–47 (GGPPTPRPLLPTRPPASP). Lys-79 carries the post-translational modification N6-acetyllysine. Residues 165-177 (SFFSSPSLANSIR) show a composition bias toward polar residues. Residues 178-193 (SPEERANPHTKSERPS) are compositionally biased toward basic and acidic residues. The segment covering 228–240 (PEPDGPDYSELAD) has biased composition (acidic residues). Ser-267 bears the Phosphoserine mark. Residues 272–303 (PQLLDPQPRFLDPQALEPLGEGLELPPLQPLA) are compositionally biased toward low complexity. Positions 391 to 401 (ILCRRRKAGRG) are enriched in basic residues. A DNA-binding region (a.T hook 1) is located at residues 395-407 (RRKAGRGRKADSG). A compositionally biased stretch (pro residues) spans 427–447 (EPPPLPPPPPPTLSGPGPVPE). The segment at residues 541 to 553 (KRKRGRPPKNLLL) is a DNA-binding region (a.T hook 2). Residues 578-604 (MPEVKKRRRRKQKLASPQPSYAADAND) form a disordered region. A Phosphoserine modification is found at Ser-593. Lys-606 participates in a covalent cross-link: Glycyl lysine isopeptide (Lys-Gly) (interchain with G-Cter in SUMO2). Residues 714–789 (LTELGHPRKR…PGGQAGRNCG (76 aa)) form a disordered region. The segment covering 734 to 743 (KPKRKRRSRK) has biased composition (basic residues). Phosphoserine is present on residues Ser-825 and Ser-842. An Omega-N-methylarginine modification is found at Arg-887. Residue Ser-892 is modified to Phosphoserine. Positions 942-967 (KLAPPPSAVARSPTTHPPANTYPPQY) are disordered. Ser-1060 is subject to Phosphoserine. Disordered stretches follow at residues 1152-1191 (VSET…QSSL) and 1245-1306 (STSA…PDLG). Low complexity-rich tracts occupy residues 1153–1168 (SETF…QFSQ), 1180–1191 (SEASSSEGQSSL), and 1245–1264 (STSA…PRQP). Ser-1180 is subject to Phosphoserine. Phosphoserine occurs at positions 1315, 1317, and 1392. Phosphothreonine is present on Thr-1394. A Phosphoserine modification is found at Ser-1396. Lys-1402 is covalently cross-linked (Glycyl lysine isopeptide (Lys-Gly) (interchain with G-Cter in SUMO2)). Residues 1495–1525 (HLASPPATPKADKEPLEMARPPGPPRGPAAA) are disordered. Phosphoserine is present on residues Ser-1498 and Ser-1540.

It is found in the nucleus. It localises to the chromosome. Transcription factor required for the proper patterning of the epidermis, which plays a key role in early epithelial morphogenesis. Directly binds promoter and enhancer regions and acts by maintaining local enhancer-promoter chromatin architecture. Interacts with many sequence-specific zinc-finger transcription factors and methyl-CpG-binding proteins to regulate the expression of mesoderm genes that wire surface ectoderm stratification. This is Transcription factor Gibbin from Mus musculus (Mouse).